We begin with the raw amino-acid sequence, 265 residues long: Undecaprenyl-diphosphatase (265 aa).

The next 8 membrane-spanning stretches (helical) occupy residues 19–39 (FLPVSSTGHLILVGHLIGFTG), 42–62 (ADSFDVIIQLGAILAVVCLYW), 80–100 (IRGLWMLFLTSLPAGLIGLVA), 108–128 (LFNPWSVALALSVGAVMIFLV), 143–163 (MTPGLALGIGCFQCLSLWPGF), 181–201 (SLAAEYSFIGAVPLMFAATLY), 220–240 (IGFVVSFVSALIAVKAFIVLV), and 243–263 (ITLRPFAWYRLALAAAVFFFW).

It belongs to the UppP family.

It localises to the cell inner membrane. It carries out the reaction di-trans,octa-cis-undecaprenyl diphosphate + H2O = di-trans,octa-cis-undecaprenyl phosphate + phosphate + H(+). In terms of biological role, catalyzes the dephosphorylation of undecaprenyl diphosphate (UPP). Confers resistance to bacitracin. In Solidesulfovibrio magneticus (strain ATCC 700980 / DSM 13731 / RS-1) (Desulfovibrio magneticus), this protein is Undecaprenyl-diphosphatase.